A 63-amino-acid chain; its full sequence is MIVVPLKEGENIEKALKKFKRKFEKTGVVKELRGRQAFEKPSVTKRKQTMRAIYVQHLQQVEE.

Belongs to the bacterial ribosomal protein bS21 family.

The protein is Small ribosomal subunit protein bS21 of Parabacteroides distasonis (strain ATCC 8503 / DSM 20701 / CIP 104284 / JCM 5825 / NCTC 11152).